A 159-amino-acid chain; its full sequence is Probable inactive acireductone dioxygenase 2 (159 aa).

This sequence belongs to the acireductone dioxygenase (ARD) family.

The protein resides in the cytoplasm. It is found in the nucleus. Its function is as follows. Probable inactive acireductone dioxygenase. The chain is Probable inactive acireductone dioxygenase 2 from Caenorhabditis briggsae.